The following is a 260-amino-acid chain: Octanoyltransferase (260 aa).

The 200-residue stretch at 42 to 241 (PQVPDGLLLL…SFCQVFGLQA (200 aa)) folds into the BPL/LPL catalytic domain. Substrate is bound by residues 97–104 (RGGEVTYH), 172–174 (AIG), and 185–187 (GFA). Residue C203 is the Acyl-thioester intermediate of the active site.

Belongs to the LipB family.

It is found in the cytoplasm. The catalysed reaction is octanoyl-[ACP] + L-lysyl-[protein] = N(6)-octanoyl-L-lysyl-[protein] + holo-[ACP] + H(+). The protein operates within protein modification; protein lipoylation via endogenous pathway; protein N(6)-(lipoyl)lysine from octanoyl-[acyl-carrier-protein]: step 1/2. Functionally, catalyzes the transfer of endogenously produced octanoic acid from octanoyl-acyl-carrier-protein onto the lipoyl domains of lipoate-dependent enzymes. Lipoyl-ACP can also act as a substrate although octanoyl-ACP is likely to be the physiological substrate. This chain is Octanoyltransferase, found in Synechococcus sp. (strain JA-3-3Ab) (Cyanobacteria bacterium Yellowstone A-Prime).